The sequence spans 266 residues: Hydroxyethylthiazole kinase (266 aa).

Residue Met-43 coordinates substrate. Arg-119 and Thr-166 together coordinate ATP. Residue Gly-193 coordinates substrate.

It belongs to the Thz kinase family. Mg(2+) is required as a cofactor.

The enzyme catalyses 5-(2-hydroxyethyl)-4-methylthiazole + ATP = 4-methyl-5-(2-phosphooxyethyl)-thiazole + ADP + H(+). The protein operates within cofactor biosynthesis; thiamine diphosphate biosynthesis; 4-methyl-5-(2-phosphoethyl)-thiazole from 5-(2-hydroxyethyl)-4-methylthiazole: step 1/1. Its function is as follows. Catalyzes the phosphorylation of the hydroxyl group of 4-methyl-5-beta-hydroxyethylthiazole (THZ). This Methanococcus maripaludis (strain C6 / ATCC BAA-1332) protein is Hydroxyethylthiazole kinase.